A 422-amino-acid chain; its full sequence is tRNA(Met) cytidine acetate ligase (422 aa).

ATP is bound by residues 7 to 20 (ITEYNPFHNGHLYH), G102, N172, and R197.

The protein belongs to the TmcAL family.

It is found in the cytoplasm. The enzyme catalyses cytidine(34) in elongator tRNA(Met) + acetate + ATP = N(4)-acetylcytidine(34) in elongator tRNA(Met) + AMP + diphosphate. Its function is as follows. Catalyzes the formation of N(4)-acetylcytidine (ac(4)C) at the wobble position of elongator tRNA(Met), using acetate and ATP as substrates. First activates an acetate ion to form acetyladenylate (Ac-AMP) and then transfers the acetyl group to tRNA to form ac(4)C34. The chain is tRNA(Met) cytidine acetate ligase from Halothermothrix orenii (strain H 168 / OCM 544 / DSM 9562).